Consider the following 471-residue polypeptide: MTDLPDSTRWQLWIVAFGFFMQSLDTTIVNTALPSMAQSLGESPLHMHMVIVSYVLTVAVMLPASGWLADKVGVRNIFFTAIVLFTLGSLFCALSGTLNELLLARALQGVGGAMMVPVGRLTVMKIVPREQYMAAMTFVTLPGQIGPLLGPALGGLLVEYASWHWIFLINIPVGIIGAITTLMLMPNYTMQTRRFDLSGFLLLAVGMAVLTLALDGSKGTGFSPLAIAGLVAVGVVALVLYLLHAQNNNRALFSLKLFRTRTFSLGLAGSFAGRIGSGMLPFMTPVFLQIGFGFSPFHAGLMMIPMVLGSMGMKRIVVQVVNRFGYRRVLVATTLGLSLVTLLFMTTALLGWYYVLPFVLFLQGMVNSTRFSSMNTLTLKDLPDNLASSGNSLLSMIMQLSMSIGVTIAGLLLGLFGSQHVSVDSGTTQTVFMYTWLSMASIIALPAFIFARVPNDTHQNVAISRRKRSAQ.

Residues 1-11 lie on the Periplasmic side of the membrane; that stretch reads MTDLPDSTRWQ. Residues 12–32 traverse the membrane as a helical segment; the sequence is LWIVAFGFFMQSLDTTIVNTA. The Cytoplasmic portion of the chain corresponds to 33–48; the sequence is LPSMAQSLGESPLHMH. A helical transmembrane segment spans residues 49-69; sequence MVIVSYVLTVAVMLPASGWLA. Residues 70–76 are Periplasmic-facing; the sequence is DKVGVRN. A helical membrane pass occupies residues 77–97; that stretch reads IFFTAIVLFTLGSLFCALSGT. Over 98 to 101 the chain is Cytoplasmic; that stretch reads LNEL. The chain crosses the membrane as a helical span at residues 102-124; that stretch reads LLARALQGVGGAMMVPVGRLTVM. Residues 125–137 lie on the Periplasmic side of the membrane; it reads KIVPREQYMAAMT. A helical transmembrane segment spans residues 138 to 158; the sequence is FVTLPGQIGPLLGPALGGLLV. Residues 159–164 are Cytoplasmic-facing; sequence EYASWH. Residues 165 to 185 traverse the membrane as a helical segment; sequence WIFLINIPVGIIGAITTLMLM. Over 186–196 the chain is Periplasmic; the sequence is PNYTMQTRRFD. Residues 197–217 traverse the membrane as a helical segment; that stretch reads LSGFLLLAVGMAVLTLALDGS. Topologically, residues 218 to 224 are cytoplasmic; that stretch reads KGTGFSP. A helical transmembrane segment spans residues 225-245; it reads LAIAGLVAVGVVALVLYLLHA. Residues 246-262 lie on the Periplasmic side of the membrane; sequence QNNNRALFSLKLFRTRT. The helical transmembrane segment at 263–283 threads the bilayer; the sequence is FSLGLAGSFAGRIGSGMLPFM. Residues 284–285 are Cytoplasmic-facing; sequence TP. Residues 286 to 306 traverse the membrane as a helical segment; that stretch reads VFLQIGFGFSPFHAGLMMIPM. The Periplasmic portion of the chain corresponds to 307-341; that stretch reads VLGSMGMKRIVVQVVNRFGYRRVLVATTLGLSLVT. A helical membrane pass occupies residues 342 to 362; it reads LLFMTTALLGWYYVLPFVLFL. At 363-395 the chain is on the cytoplasmic side; the sequence is QGMVNSTRFSSMNTLTLKDLPDNLASSGNSLLS. A helical transmembrane segment spans residues 396–416; it reads MIMQLSMSIGVTIAGLLLGLF. Residues 417–430 lie on the Periplasmic side of the membrane; that stretch reads GSQHVSVDSGTTQT. The chain crosses the membrane as a helical span at residues 431–451; that stretch reads VFMYTWLSMASIIALPAFIFA. At 452–471 the chain is on the cytoplasmic side; that stretch reads RVPNDTHQNVAISRRKRSAQ.

The protein belongs to the major facilitator superfamily. TCR/Tet family.

The protein resides in the cell inner membrane. The protein is Putative multidrug resistance protein MdtD of Escherichia coli O6:H1 (strain CFT073 / ATCC 700928 / UPEC).